The sequence spans 205 residues: Large ribosomal subunit protein uL3 (205 aa).

Residues 126 to 150 (GGPKTHGQSDRHRAPGSIGSTTTPG) are disordered.

The protein belongs to the universal ribosomal protein uL3 family. As to quaternary structure, part of the 50S ribosomal subunit. Forms a cluster with proteins L14 and L19.

In terms of biological role, one of the primary rRNA binding proteins, it binds directly near the 3'-end of the 23S rRNA, where it nucleates assembly of the 50S subunit. The protein is Large ribosomal subunit protein uL3 of Dehalococcoides mccartyi (strain ATCC BAA-2100 / JCM 16839 / KCTC 5957 / BAV1).